Here is a 258-residue protein sequence, read N- to C-terminus: UPF0246 protein Bpro_3713 (258 aa).

It belongs to the UPF0246 family.

The chain is UPF0246 protein Bpro_3713 from Polaromonas sp. (strain JS666 / ATCC BAA-500).